Consider the following 73-residue polypeptide: uncharacterized protein (73 aa).

This is an uncharacterized protein from Sinorhizobium fredii (strain NBRC 101917 / NGR234).